The chain runs to 573 residues: MSLKINKLKYASMYGPTKGDKIRLADTDIIVEIEKDFTVYGDENKFGGGKTIRDGMAQSSTATRDQGVLDLVITNATIIDHWGIVKADIGIKDGKIAGIGKAGNPDTMDGVEPHMIIGASTEAHGGENLIVTAGGIDTHIHFISPQQIETALYSGVTTMIGGGTGPADGTNATTITPGKWYIEKMLQAAEAFPMNLGFFGKGNCSTEAPLDEQIEAGALGLKIHEDWGASPAVIDASLKVADKYDVQVAIHTDTLNEAGFLEDTMNAINGRVIHTFHTEGAGGGHAPDIIKAAMYPNVLPASTNPTRPYTVNTIDEHLDMLMVCHHLSKNIPEDVSFADSRIRPETIAAEDILHDMGVFSIMSSDSQAMGRVGEVVTRTWQTADKMRKQRGDLAEDKGNKNDNFRAKRYVAKYTINPAIAHGISQYVGSIEVGKMADLVLWKPMLFGTKPEIIIKGGMIIAARMGDPNASIPTPQPVLYRNMFGAFGKALSKTCATFVSQASIKNNIAEEYGLEKMILPVTGCRNISKKHLIHNDKTPEITVNPENYEVRVDGEKIICEPATHLPMAQRYFLF.

3 residues coordinate Ni(2+): His-139, His-141, and Lys-222. Lys-222 is modified (N6-carboxylysine). Residue His-224 coordinates substrate. Ni(2+) contacts are provided by His-251 and His-277. His-325 acts as the Proton donor in catalysis. Asp-365 contacts Ni(2+).

The protein belongs to the metallo-dependent hydrolases superfamily. Urease alpha subunit family. In terms of assembly, heterotrimer of UreA (gamma), UreB (beta) and UreC (alpha) subunits. Three heterotrimers associate to form the active enzyme. Ni cation is required as a cofactor. Carboxylation allows a single lysine to coordinate two nickel ions.

Its subcellular location is the cytoplasm. The catalysed reaction is urea + 2 H2O + H(+) = hydrogencarbonate + 2 NH4(+). The protein operates within nitrogen metabolism; urea degradation; CO(2) and NH(3) from urea (urease route): step 1/1. This Flavobacterium johnsoniae (strain ATCC 17061 / DSM 2064 / JCM 8514 / BCRC 14874 / CCUG 350202 / NBRC 14942 / NCIMB 11054 / UW101) (Cytophaga johnsonae) protein is Urease subunit alpha.